We begin with the raw amino-acid sequence, 432 residues long: Enolase (432 aa).

Gln163 serves as a coordination point for (2R)-2-phosphoglycerate. Catalysis depends on Glu205, which acts as the Proton donor. The Mg(2+) site is built by Asp242, Glu285, and Asp312. Residues Lys337, Arg366, Ser367, and Lys388 each contribute to the (2R)-2-phosphoglycerate site. Residue Lys337 is the Proton acceptor of the active site.

Belongs to the enolase family. Requires Mg(2+) as cofactor.

It localises to the cytoplasm. It is found in the secreted. The protein localises to the cell surface. It carries out the reaction (2R)-2-phosphoglycerate = phosphoenolpyruvate + H2O. Its pathway is carbohydrate degradation; glycolysis; pyruvate from D-glyceraldehyde 3-phosphate: step 4/5. In terms of biological role, catalyzes the reversible conversion of 2-phosphoglycerate (2-PG) into phosphoenolpyruvate (PEP). It is essential for the degradation of carbohydrates via glycolysis. The polypeptide is Enolase (Desulfovibrio desulfuricans (strain ATCC 27774 / DSM 6949 / MB)).